Here is a 361-residue protein sequence, read N- to C-terminus: Ribosomal RNA large subunit methyltransferase M (361 aa).

S-adenosyl-L-methionine-binding positions include serine 187, 220-223, aspartate 239, aspartate 259, and aspartate 276; that span reads CPGG. Catalysis depends on lysine 305, which acts as the Proton acceptor.

Belongs to the class I-like SAM-binding methyltransferase superfamily. RNA methyltransferase RlmE family. RlmM subfamily. In terms of assembly, monomer.

The protein localises to the cytoplasm. It catalyses the reaction cytidine(2498) in 23S rRNA + S-adenosyl-L-methionine = 2'-O-methylcytidine(2498) in 23S rRNA + S-adenosyl-L-homocysteine + H(+). In terms of biological role, catalyzes the 2'-O-methylation at nucleotide C2498 in 23S rRNA. This chain is Ribosomal RNA large subunit methyltransferase M, found in Shewanella amazonensis (strain ATCC BAA-1098 / SB2B).